A 646-amino-acid polypeptide reads, in one-letter code: Hypoxia up-regulated protein 1 (646 aa).

Residues 1-22 (MRPLVCVLWMFLFALLSSHTES) form the signal peptide. The tract at residues 572-646 (LFGGGSSVSE…KEEEKAEPQE (75 aa)) is disordered. Over residues 590-610 (VQEEDEVPTEPTKEEEQESAD) the composition is skewed to acidic residues. Residues 611 to 646 (PADKQQDKENNKEKGTSATNEKEEGKKEEEKAEPQE) show a composition bias toward basic and acidic residues.

The protein belongs to the heat shock protein 70 family.

It is found in the endoplasmic reticulum lumen. In terms of biological role, has a pivotal role in cytoprotective cellular mechanisms triggered by oxygen deprivation. May play a role as a molecular chaperone and participate in protein folding. The chain is Hypoxia up-regulated protein 1 (hyou1) from Xenopus laevis (African clawed frog).